Consider the following 113-residue polypeptide: MFVLFLIVCYFILIFNIIVPKIADKLRLEHEAFTKYRQIYGNKFRCIGDNLINYSFTPFGVKANYLVNKNTKMPAICNDIKNINSLIAVTCDDASKFIKHRNICERAYTELFL.

A helical; Signal-anchor for type III membrane protein membrane pass occupies residues 1 to 23; sequence MFVLFLIVCYFILIFNIIVPKIA. Residues 24–113 are Virion surface-facing; sequence DKLRLEHEAF…CERAYTELFL (90 aa).

This sequence belongs to the chordopoxvirinae A21 family. Envelope protein part of a stable entry-fusion complex (EFC) which is at least composed of proteins A16, A21, A28, G3, G9, H2, J5, and L5. Formation of the viral membrane is necessary for the assembly of the complex. In terms of processing, contains two intramolecular disulfide bonds. They are created by the viral disulfide bond formation pathway, a poxvirus-specific pathway that operates on the cytoplasmic side of the MV membranes.

The protein localises to the virion membrane. Functionally, envelope protein part of the entry-fusion complex responsible for the virus membrane fusion with host cell membrane during virus entry. The sequence is that of Virion membrane protein A21 homolog from Vertebrata (FPV).